The chain runs to 92 residues: RNA-binding protein Hfq (92 aa).

The Sm domain maps to 9-68 (DPYLNALRRERIPVSIYLVNGIKLQGQIESFDQFVILLKNTVSQMVYKHAISTVVPARSV). A compositionally biased stretch (polar residues) spans 69 to 81 (SHNNGGTSHTQQA). The segment at 69–92 (SHNNGGTSHTQQAPAVEAVADKAE) is disordered.

This sequence belongs to the Hfq family. In terms of assembly, homohexamer.

In terms of biological role, RNA chaperone that binds small regulatory RNA (sRNAs) and mRNAs to facilitate mRNA translational regulation in response to envelope stress, environmental stress and changes in metabolite concentrations. Also binds with high specificity to tRNAs. This chain is RNA-binding protein Hfq, found in Actinobacillus pleuropneumoniae serotype 5b (strain L20).